The chain runs to 109 residues: RNA-binding protein Hfq (109 aa).

One can recognise a Sm domain in the interval 9-68 (DPFLNALRKEKVSVSVYLVNGIKLQGQVEAFDQFCIVLRNTVNQMVYKHAISTIVPAKSV). A disordered region spans residues 77–109 (PYHQNSNDEQDENVDDIHSDDLEIQENEGNIHE).

This sequence belongs to the Hfq family. In terms of assembly, homohexamer.

In terms of biological role, RNA chaperone that binds small regulatory RNA (sRNAs) and mRNAs to facilitate mRNA translational regulation in response to envelope stress, environmental stress and changes in metabolite concentrations. Also binds with high specificity to tRNAs. The chain is RNA-binding protein Hfq from Francisella tularensis subsp. tularensis (strain FSC 198).